The primary structure comprises 171 residues: Ribosome maturation factor RimP (171 aa).

The protein belongs to the RimP family.

It is found in the cytoplasm. Required for maturation of 30S ribosomal subunits. This is Ribosome maturation factor RimP from Anaeromyxobacter sp. (strain Fw109-5).